The chain runs to 220 residues: Ribosomal RNA large subunit methyltransferase E (220 aa).

G60, W62, D92, D108, and D133 together coordinate S-adenosyl-L-methionine. Residue K173 is the Proton acceptor of the active site. A disordered region spans residues 195–220 (APRKPKASRDKSSETFILGRHLKRPR).

The protein belongs to the class I-like SAM-binding methyltransferase superfamily. RNA methyltransferase RlmE family.

The protein resides in the cytoplasm. It catalyses the reaction uridine(2552) in 23S rRNA + S-adenosyl-L-methionine = 2'-O-methyluridine(2552) in 23S rRNA + S-adenosyl-L-homocysteine + H(+). Functionally, specifically methylates the uridine in position 2552 of 23S rRNA at the 2'-O position of the ribose in the fully assembled 50S ribosomal subunit. The chain is Ribosomal RNA large subunit methyltransferase E from Burkholderia lata (strain ATCC 17760 / DSM 23089 / LMG 22485 / NCIMB 9086 / R18194 / 383).